Here is a 345-residue protein sequence, read N- to C-terminus: UPF0324 membrane protein HH_1161 (345 aa).

Helical transmembrane passes span 7 to 29, 33 to 50, 90 to 112, 122 to 141, 154 to 176, 186 to 208, 215 to 237, 262 to 281, 293 to 312, and 322 to 344; these read GFLY…SATL, LSPL…SPFY, LGLN…AIFI, ISLL…ILAL, VALG…IYYA, WGIF…AISP, IIVK…YIIF, LYIP…NSFI, FASK…QIDW, and TFAL…VYIM.

This sequence belongs to the UPF0324 family.

The protein resides in the cell membrane. In Helicobacter hepaticus (strain ATCC 51449 / 3B1), this protein is UPF0324 membrane protein HH_1161.